A 227-amino-acid chain; its full sequence is ATP synthase F(0) complex subunit a (227 aa).

The next 6 helical transmembrane spans lie at 14 to 34, 69 to 89, 99 to 119, 139 to 159, 165 to 185, and 190 to 210; these read FLGIPLIALAISIPWLMFPTP, WAILFTALMLFLITINLLGLL, LSLNMAFALPLWLTTVLIGMF, VPVLIIIETISLFIRPLALGV, LTAGHLLMQLIATAAFVLLTM, and ALLTSLVLFLLTILEVAVAMI.

It belongs to the ATPase A chain family. In terms of assembly, component of the ATP synthase complex composed at least of ATP5F1A/subunit alpha, ATP5F1B/subunit beta, ATP5MC1/subunit c (homooctomer), MT-ATP6/subunit a, MT-ATP8/subunit 8, ATP5ME/subunit e, ATP5MF/subunit f, ATP5MG/subunit g, ATP5MK/subunit k, ATP5MJ/subunit j, ATP5F1C/subunit gamma, ATP5F1D/subunit delta, ATP5F1E/subunit epsilon, ATP5PF/subunit F6, ATP5PB/subunit b, ATP5PD/subunit d, ATP5PO/subunit OSCP. ATP synthase complex consists of a soluble F(1) head domain (subunits alpha(3) and beta(3)) - the catalytic core - and a membrane F(0) domain - the membrane proton channel (subunits c, a, 8, e, f, g, k and j). These two domains are linked by a central stalk (subunits gamma, delta, and epsilon) rotating inside the F1 region and a stationary peripheral stalk (subunits F6, b, d, and OSCP). Interacts with DNAJC30; interaction is direct.

The protein resides in the mitochondrion inner membrane. The enzyme catalyses H(+)(in) = H(+)(out). In terms of biological role, subunit a, of the mitochondrial membrane ATP synthase complex (F(1)F(0) ATP synthase or Complex V) that produces ATP from ADP in the presence of a proton gradient across the membrane which is generated by electron transport complexes of the respiratory chain. ATP synthase complex consist of a soluble F(1) head domain - the catalytic core - and a membrane F(1) domain - the membrane proton channel. These two domains are linked by a central stalk rotating inside the F(1) region and a stationary peripheral stalk. During catalysis, ATP synthesis in the catalytic domain of F(1) is coupled via a rotary mechanism of the central stalk subunits to proton translocation. With the subunit c (ATP5MC1), forms the proton-conducting channel in the F(0) domain, that contains two crucial half-channels (inlet and outlet) that facilitate proton movement from the mitochondrial intermembrane space (IMS) into the matrix. Protons are taken up via the inlet half-channel and released through the outlet half-channel, following a Grotthuss mechanism. The protein is ATP synthase F(0) complex subunit a of Scyliorhinus canicula (Small-spotted catshark).